Reading from the N-terminus, the 245-residue chain is MAARHQFENSNEIGVFAALTNAYCLAAVGGSENFYSVFEAELSNEIPVIKASLAGTRLVGRLSVGNKHGLLLPTSATDQEVMHIRNSLPDEVIVQRTEERLSALGNCVACNDHVALVHPDIDQETEEIIADVLGVEVFRQSVAGNVLVGSFCKFSNRGGMVHPQASVQEVDELSSLLQVPLVAGTINRGSDVIGAGLLVNDWIAFCGLDTTSTEIQVIESIYQLHGADSSGAVRDIRASLLDTLV.

This sequence belongs to the eIF-6 family. As to quaternary structure, monomer. Associates with the 60S ribosomal subunit.

The protein localises to the cytoplasm. It is found in the nucleus. It localises to the nucleolus. Binds to the 60S ribosomal subunit and prevents its association with the 40S ribosomal subunit to form the 80S initiation complex in the cytoplasm. May also be involved in ribosome biogenesis. The sequence is that of Eukaryotic translation initiation factor 6 from Ostreococcus lucimarinus (strain CCE9901).